A 709-amino-acid polypeptide reads, in one-letter code: Nicastrin (709 aa).

A signal peptide spans 1–33 (MATAGGGSGADPGSRGLLRLLSFCVLLAGLCRG). Over 34–669 (NSVERKIYIP…IFLIASKELE (636 aa)) the chain is Extracellular. 2 N-linked (GlcNAc...) asparagine glycosylation sites follow: N45 and N55. Intrachain disulfides connect C50–C62 and C140–C159. N187, N200, and N204 each carry an N-linked (GlcNAc...) asparagine glycan. 2 disulfides stabilise this stretch: C195–C213 and C230–C248. N264, N387, N417, N435, N464, N506, N530, N562, N573, N580, and N612 each carry an N-linked (GlcNAc...) asparagine glycan. A disulfide bond links C586 and C620. Residues 670–690 (LITLTVGFGILIFSLIVTYCI) form a helical membrane-spanning segment. The Cytoplasmic portion of the chain corresponds to 691–709 (NAKADVLFIAPREPGAVSY).

Belongs to the nicastrin family. In terms of assembly, component of the gamma-secretase complex. The functional gamma-secretase complex is composed of at least four polypeptides: a presenilin homodimer (PSEN1 or PSEN2), nicastrin (NCSTN), APH1 (APH1A or APH1B) and PSENEN/PEN2. Binds to proteolytic processed C-terminal fragments C83 and C99 of the amyloid precursor protein (APP). Interacts with PSEN1 and PSEN2. In terms of processing, N-glycosylated. Detected in brain (at protein level). Widely expressed.

It localises to the membrane. The protein resides in the cytoplasmic vesicle membrane. It is found in the melanosome. Essential subunit of the gamma-secretase complex, an endoprotease complex that catalyzes the intramembrane cleavage of integral membrane proteins such as Notch receptors and APP (amyloid-beta precursor protein). The gamma-secretase complex plays a role in Notch and Wnt signaling cascades and regulation of downstream processes via its role in processing key regulatory proteins, and by regulating cytosolic CTNNB1 levels. The sequence is that of Nicastrin (NCSTN) from Homo sapiens (Human).